An 895-amino-acid polypeptide reads, in one-letter code: Plasma membrane ATPase 1 (895 aa).

Positions 1–53 are disordered; that stretch reads MSATEPTNEKVDKIVSDDEDEDIDQLVADLQSNPGAGDEEEEEENDSSFKAVP. Over 1-92 the chain is Cytoplasmic; the sequence is MSATEPTNEK…AEEQENLVLK (92 aa). Over residues 7 to 16 the composition is skewed to basic and acidic residues; sequence TNEKVDKIVS. Residues 37–46 show a composition bias toward acidic residues; that stretch reads GDEEEEEEND. The helical transmembrane segment at 93 to 113 threads the bilayer; sequence FVMFFVGPIQFVMEAAAVLAA. Residues 114–117 are Extracellular-facing; it reads GLED. A helical transmembrane segment spans residues 118 to 137; that stretch reads WVDFGVICALLLLNAFVGFI. Topologically, residues 138 to 268 are cytoplasmic; that stretch reads QEYQAGSIVD…GTGHFTEVLN (131 aa). A helical membrane pass occupies residues 269–290; it reads GIGTTLLVFVIVTLLVVWVACF. The Extracellular portion of the chain corresponds to 291–301; sequence YRTVRIVPILR. The chain crosses the membrane as a helical span at residues 302 to 324; the sequence is YTLAITIIGVPVGLPAVVTTTMA. The Cytoplasmic segment spans residues 325–696; the sequence is VGAAYLAKKQ…IAILNRSLDI (372 aa). The active-site 4-aspartylphosphate intermediate is the D355. Mg(2+)-binding residues include D611 and D615. Residues 697 to 715 traverse the membrane as a helical segment; that stretch reads NLIVFIAIFADVATLAIAY. The Extracellular segment spans residues 716–731; sequence DNAPYDPKPVKWNLPR. Residues 732-751 traverse the membrane as a helical segment; that stretch reads LWGMSIVLGIILAIGTWITL. Residues 752-801 are Cytoplasmic-facing; it reads TTMLLPKGGIIQNFGGLDGILFLQISLTENWLIFVTRAQGPFWSSIPSWQ. The chain crosses the membrane as a helical span at residues 802-822; sequence LSGAVLIVDIIATCFTLFGWW. The Extracellular portion of the chain corresponds to 823–834; the sequence is SQNWTDIVTVVR. The chain crosses the membrane as a helical span at residues 835-851; it reads TWIWSFGVFCVMGGAYY. The Cytoplasmic portion of the chain corresponds to 852–895; it reads LMSTSEAFDNFCNGRKPQQHTDKRSLEDFLVSMQRVSTQHEKST.

Belongs to the cation transport ATPase (P-type) (TC 3.A.3) family. Type IIIA subfamily.

It is found in the cell membrane. It catalyses the reaction ATP + H2O + H(+)(in) = ADP + phosphate + 2 H(+)(out). Functionally, the plasma membrane ATPase of plants and fungi is a hydrogen ion pump. The proton gradient it generates drives the active transport of nutrients by H(+)-symport. The resulting external acidification and/or internal alkinization may mediate growth responses. In Candida albicans (Yeast), this protein is Plasma membrane ATPase 1 (PMA1).